Here is a 408-residue protein sequence, read N- to C-terminus: Prenyltransferase criF (408 aa).

The dimethylallyl diphosphate site is built by arginine 94, lysine 181, tyrosine 183, arginine 248, lysine 250, tyrosine 252, glutamine 334, tyrosine 336, tyrosine 400, and tyrosine 404.

It belongs to the tryptophan dimethylallyltransferase family. In terms of assembly, homodimer.

It catalyses the reaction preechinulin + dimethylallyl diphosphate = tardioxopiperazine B + diphosphate. The catalysed reaction is preechinulin + dimethylallyl diphosphate = tardioxopiperazine A + diphosphate. The enzyme catalyses tardioxopiperazine A + dimethylallyl diphosphate = echinulin + diphosphate. It carries out the reaction tardioxopiperazine A + dimethylallyl diphosphate = variecolorin L + diphosphate. It catalyses the reaction neoechinulin A + dimethylallyl diphosphate = variecolorin G + diphosphate. The catalysed reaction is neoechinulin A + dimethylallyl diphosphate = isoechinulin A + diphosphate. The enzyme catalyses isoechinulin A + dimethylallyl diphosphate = dehydroechinulin + diphosphate. It carries out the reaction neoechinulin B + dimethylallyl diphosphate = isoechinulin B + diphosphate. The protein operates within secondary metabolite biosynthesis. Its pathway is alkaloid biosynthesis. Functionally, prenyltransferase; part of the gene cluster that mediates the biosynthesis of echinulin family alkaloid. The pathway begins with the biosynthesis of the cyclic dipeptide cyclo-L-Trp-L-Ala (cyclo-TA) by the NRPS criC via condensation of L-alanine and L-tryptophan. The prenyltransferase criA then catalyzes the first prenylation step, a reverse prenylation reaction at C2, to yield preechinulin. Preechinulin is the substrate of the cytochrome P450 monooxygenase criE that catalyzes the formation of the double bond between C10 and C11 to produce neoechulin A. The unique prenyltransferase criF functions as a competitive enzyme with criE for preechinulin metabolization and uses preechinulin for effective regiospecific prenylations. Preechinulin is prenylated by criF at C5 or C7. C7-prenylation leads to accumulation of tardioxopiperazine B without further modification by criF. In contrast, the C5-prenylated tardioxopiperazine A can be prenylated again by criF, predominantly at C7 to form echinulin or less frequently at C4 to give variecolorin L. CriF also accepts neoechilunin A to produce varlecolorin G (prenylation at C5) or isoechinulin A (prenylation at C7). CriF further converts isoechinulin A into dehydroechinulin. Moreover, a yet unidentified enzyme can also convert neoechilunin A into neoechilunin B by introducing a double bond between positions C14 and C17 and thus provides a further substrate to criF for C5 and C7 prenylation. This Aspergillus cristatus (Chinese Fuzhuan brick tea-fermentation fungus) protein is Prenyltransferase criF.